We begin with the raw amino-acid sequence, 92 residues long: UPF0728 protein (92 aa).

This sequence belongs to the UPF0728 family.

In Branchiostoma floridae (Florida lancelet), this protein is UPF0728 protein.